The chain runs to 856 residues: Translation initiation factor IF-2 (856 aa).

The region spanning 356-526 is the tr-type G domain; it reads PRAPVVTVMG…LLIADLLELK (171 aa). The tract at residues 365–372 is G1; that stretch reads GHVDHGKT. Residue 365–372 participates in GTP binding; it reads GHVDHGKT. Positions 390–394 are G2; sequence GITQH. The segment at 412 to 415 is G3; that stretch reads DTPG. GTP contacts are provided by residues 412–416 and 466–469; these read DTPGH and NKID. Positions 466–469 are G4; sequence NKID. The interval 502–504 is G5; the sequence is SAK.

It belongs to the TRAFAC class translation factor GTPase superfamily. Classic translation factor GTPase family. IF-2 subfamily.

Its subcellular location is the cytoplasm. One of the essential components for the initiation of protein synthesis. Protects formylmethionyl-tRNA from spontaneous hydrolysis and promotes its binding to the 30S ribosomal subunits. Also involved in the hydrolysis of GTP during the formation of the 70S ribosomal complex. The chain is Translation initiation factor IF-2 from Ehrlichia ruminantium (strain Gardel).